Consider the following 701-residue polypeptide: Polyribonucleotide nucleotidyltransferase (701 aa).

Mg(2+) contacts are provided by Asp489 and Asp495. The region spanning 556 to 615 is the KH domain; it reads PRIHTMKIHPDKIREVIGSGGKVIRSITEETGCAIDIEDDGTIRIASSDQASAEQAVKII. An S1 motif domain is found at 625-693; that stretch reads GQVYEGKVVR…RQGRVKLTMK (69 aa).

It belongs to the polyribonucleotide nucleotidyltransferase family. Mg(2+) is required as a cofactor.

The protein localises to the cytoplasm. The enzyme catalyses RNA(n+1) + phosphate = RNA(n) + a ribonucleoside 5'-diphosphate. Its function is as follows. Involved in mRNA degradation. Catalyzes the phosphorolysis of single-stranded polyribonucleotides processively in the 3'- to 5'-direction. In Magnetococcus marinus (strain ATCC BAA-1437 / JCM 17883 / MC-1), this protein is Polyribonucleotide nucleotidyltransferase.